Consider the following 365-residue polypeptide: 3-isopropylmalate dehydrogenase (365 aa).

Residue 78–91 (GYKWDSLPRSQRPE) participates in NAD(+) binding. Substrate is bound by residues Arg-98, Arg-108, Arg-136, and Asp-226. Residues Asp-226, Asp-250, and Asp-254 each coordinate Mg(2+). 284 to 296 (GSAPDIAGQDKAN) contacts NAD(+).

Belongs to the isocitrate and isopropylmalate dehydrogenases family. LeuB type 1 subfamily. Homodimer. It depends on Mg(2+) as a cofactor. Mn(2+) is required as a cofactor.

It is found in the cytoplasm. The catalysed reaction is (2R,3S)-3-isopropylmalate + NAD(+) = 4-methyl-2-oxopentanoate + CO2 + NADH. It functions in the pathway amino-acid biosynthesis; L-leucine biosynthesis; L-leucine from 3-methyl-2-oxobutanoate: step 3/4. Catalyzes the oxidation of 3-carboxy-2-hydroxy-4-methylpentanoate (3-isopropylmalate) to 3-carboxy-4-methyl-2-oxopentanoate. The product decarboxylates to 4-methyl-2 oxopentanoate. The polypeptide is 3-isopropylmalate dehydrogenase (Synechococcus elongatus (strain ATCC 33912 / PCC 7942 / FACHB-805) (Anacystis nidulans R2)).